The following is a 129-amino-acid chain: N16.5 matrix protein (129 aa).

An N-terminal signal peptide occupies residues Met1–Pro23. 5 consecutive repeat copies span residues Asn91–Gly92, Asn93–Gly94, Asn95–Gly96, Asn97–Gly98, and Asn99–Gly100. The tract at residues Asn91 to Gly100 is 5 X 2 AA tandem repeats of N-G.

The protein belongs to the N16 matrix protein family. In terms of assembly, heterooligomer; disulfide-linked. Pif97, Pif80, N16 and other proteins form a complex. As to expression, component of conchiolin, the organic matrix of nacre. Specifically expressed in mantle epithelium.

The protein resides in the secreted. The protein localises to the extracellular space. Its subcellular location is the extracellular matrix. Its function is as follows. May be specifically involved in the formation of the nacreous layer. The chain is N16.5 matrix protein from Pinctada fucata (Akoya pearl oyster).